Consider the following 248-residue polypeptide: Probable phosphatase VF_A0065 (248 aa).

Positions 8, 10, 16, 41, 74, 102, 132, 194, and 196 each coordinate Zn(2+).

The protein belongs to the PHP family. It depends on Zn(2+) as a cofactor.

The chain is Probable phosphatase VF_A0065 from Aliivibrio fischeri (strain ATCC 700601 / ES114) (Vibrio fischeri).